The following is a 236-amino-acid chain: Protein EVI2A (236 aa).

The N-terminal stretch at methionine 1 to alanine 30 is a signal peptide. Asparagine 31, asparagine 38, asparagine 49, asparagine 73, and asparagine 112 each carry an N-linked (GlcNAc...) asparagine glycan. Over asparagine 31 to methionine 133 the chain is Extracellular. Residues alanine 134–leucine 154 traverse the membrane as a helical segment. The Cytoplasmic portion of the chain corresponds to serine 155 to glycine 236. Serine 211 carries the phosphoserine modification. The tract at residues alanine 217 to glycine 236 is disordered. Positions threonine 218–glycine 236 are enriched in basic and acidic residues.

This sequence belongs to the EVI2A family.

Its subcellular location is the membrane. Its function is as follows. May complex with itself or/and other proteins within the membrane, to function as part of a cell-surface receptor. This chain is Protein EVI2A (EVI2A), found in Homo sapiens (Human).